A 445-amino-acid chain; its full sequence is StAR-related lipid transfer protein 3 (445 aa).

The Cytoplasmic segment spans residues 1-51; it reads MSKLPRELTRDLERSLPAVASLGSSLSHSQSLSSHLLPPPEKRRAISDVRR. The MENTAL domain maps to 46–217; that stretch reads ISDVRRTFCL…YSPPESFAGS (172 aa). A helical transmembrane segment spans residues 52–72; the sequence is TFCLFVTFDLLFISLLWIIEL. Residues 73–94 lie on the Extracellular side of the membrane; that stretch reads NTNTGIRKNLEQEIIQYNFKTS. A helical membrane pass occupies residues 95-115; that stretch reads FFDIFVLAFFRFSGLLLGYAV. The Cytoplasmic portion of the chain corresponds to 116–120; that stretch reads LRLRH. Residues 121–141 form a helical membrane-spanning segment; the sequence is WWVIAVTTLVSSAFLIVKVIL. Residues 142–148 lie on the Extracellular side of the membrane; it reads SELLSKG. Residues 149-169 form a helical membrane-spanning segment; sequence AFGYLLPIVSFVLAWLETWFL. At 170-445 the chain is on the cytoplasmic side; sequence DFKVLPQEAE…QRISELGARA (276 aa). Residues 206 to 212 carry the FFAT motif; sequence QFYSPPE. Serine 209 is modified (phosphoserine). The 214-residue stretch at 230 to 443 folds into the START domain; the sequence is SFSAQEREYI…LRQRISELGA (214 aa).

It belongs to the STARD3 family. As to quaternary structure, homodimer. Interacts (via the MENTAL domain) with STARD3NL. Interacts (via phosphorylated FFAT motif) with VAPA (via MSP domain). Interacts (via phosphorylated FFAT motif) with VAPB (via MSP domain). Interacts (via phosphorylated FFAT motif) with MOSPD2 (via MSP domain); this interaction allows enrichment of MOSPD2 around endosomes. Post-translationally, phosphorylation at Ser-209 is necessary and sufficient for the direct interaction of the phosphorylated FFAT motif with the MSP domain of MOSPD2, VAPA and VAPB and allows the tethering of two membranes that participates in the formation of ER-endosome contacts. Phosphorylation of the FFAT motif leads to conformation changes. Additional phosphorylations around the core FFAT motif (QFYSPPE) are not essential but strengthen the interaction with MOSPD2, VAPA and VAPB. Phosphorylation at Ser-209 of FFAT motif drives membrane tethering between the endoplasmic reticulum and late endosomes via interaction with VAPA and VAPB that in turn allows the efficient transport of sterol mediated by the START domain. Expressed in retina.

The protein resides in the late endosome membrane. The catalysed reaction is cholesterol(in) = cholesterol(out). Its function is as follows. Sterol-binding protein that mediates cholesterol transport from the endoplasmic reticulum to endosomes. The sterol transport mechanism is triggered by phosphorylation of FFAT motif that leads to membrane tethering between the endoplasmic reticulum and late endosomes via interaction with VAPA and VAPB. Acts as a lipid transfer protein that redirects sterol to the endosome at the expense of the cell membrane and favors membrane formation inside endosomes. May also mediate cholesterol transport between other membranes, such as mitochondria membrane or cell membrane. However, such results need additional experimental evidences; probably mainly mediates cholesterol transport from the endoplasmic reticulum to endosomes. Does not activate transcriptional cholesterol sensing. Able to bind other lipids, such as lutein, a xanthophyll carotenoids that form the macular pigment of the retina. The polypeptide is StAR-related lipid transfer protein 3 (Homo sapiens (Human)).